Here is a 226-residue protein sequence, read N- to C-terminus: ATP synthase subunit a (226 aa).

The next 5 membrane-spanning stretches (helical) occupy residues 20 to 40 (LNWF…WLMP), 74 to 94 (FVSL…PYIF), 100 to 120 (LTLT…YGWI), 162 to 182 (LTAN…TGPM), and 187 to 207 (IILS…SAVA).

The protein belongs to the ATPase A chain family. As to quaternary structure, F-type ATPases have 2 components, CF(1) - the catalytic core - and CF(0) - the membrane proton channel. CF(1) has five subunits: alpha(3), beta(3), gamma(1), delta(1), epsilon(1). CF(0) has three main subunits: a, b and c.

The protein localises to the mitochondrion inner membrane. Functionally, mitochondrial membrane ATP synthase (F(1)F(0) ATP synthase or Complex V) produces ATP from ADP in the presence of a proton gradient across the membrane which is generated by electron transport complexes of the respiratory chain. F-type ATPases consist of two structural domains, F(1) - containing the extramembraneous catalytic core and F(0) - containing the membrane proton channel, linked together by a central stalk and a peripheral stalk. During catalysis, ATP synthesis in the catalytic domain of F(1) is coupled via a rotary mechanism of the central stalk subunits to proton translocation. Key component of the proton channel; it may play a direct role in the translocation of protons across the membrane. This chain is ATP synthase subunit a (mt:ATPase6), found in Aedes albopictus (Asian tiger mosquito).